Consider the following 180-residue polypeptide: Large ribosomal subunit protein uL6 (180 aa).

It belongs to the universal ribosomal protein uL6 family. Part of the 50S ribosomal subunit.

This protein binds to the 23S rRNA, and is important in its secondary structure. It is located near the subunit interface in the base of the L7/L12 stalk, and near the tRNA binding site of the peptidyltransferase center. The chain is Large ribosomal subunit protein uL6 from Clostridium botulinum (strain Alaska E43 / Type E3).